The sequence spans 671 residues: cGMP-dependent protein kinase 1 (671 aa).

S2 carries the post-translational modification N-acetylserine. The stretch at 2–59 forms a coiled coil; sequence SELEEDFAKILMLKEERIKELEKRLSEKEEEIQELKRKLHKCQSVLPVPSTHIGPRTT. Residues 2–102 form a required for dimerization region; the sequence is SELEEDFAKI…LIKEAILDND (101 aa). A leucine-zipper region spans residues 9–44; that stretch reads AKILMLKEERIKELEKRLSEKEEEIQELKRKLHKCQ. An autoinhibitory domain region spans residues 50–75; sequence PSTHIGPRTTRAQGISAEPQTYRSFH. T59 is subject to Phosphothreonine; by autocatalysis. Positions 103–220 are cGMP-binding, high affinity; sequence FMKNLELSQI…EYMEFLKSVP (118 aa). Residues 167–170 and 177–178 contribute to the 3',5'-cyclic AMP site; these read GELA and RT. 3',5'-cyclic GMP-binding positions include 167 to 170, 177 to 178, R282, 291 to 294, 301 to 302, and Y336; these read GELA, RT, and GEKA. The segment at 221-341 is cGMP-binding, low affinity; it reads TFQSLPEEIL…SNKAYEDAEA (121 aa). The Protein kinase domain occupies 360-619; it reads FNIIDTLGVG…VKDIQKHKWF (260 aa). ATP is bound by residues 366–374 and K390; that span reads LGVGGFGRV. The Proton acceptor role is filled by D484. The residue at position 515 (T515) is a Phosphothreonine. Residues 620–671 form the AGC-kinase C-terminal domain; it reads EGFNWEGLRKGTLTPPIIPSVASPTDTSNFDSFPEDNDEPPPDDNSGWDIDF. The segment at 635-671 is disordered; it reads PIIPSVASPTDTSNFDSFPEDNDEPPPDDNSGWDIDF. Residues 652–661 show a composition bias toward acidic residues; it reads FPEDNDEPPP.

This sequence belongs to the protein kinase superfamily. AGC Ser/Thr protein kinase family. cGMP subfamily. In terms of assembly, isoform alpha: parallel homodimer or heterodimer and also heterotetramer. Interacts directly with PPP1R12A. Non-covalent dimer of dimer of PRKG1-PRKG1 and PPP1R12A-PPP1R12A. This interaction targets PRKG1 to stress fibers to mediate smooth muscle cell relaxation and vasodilation in responses to rises in cGMP. Isoform beta: antiparallel homodimer. Part of cGMP kinase signaling complex at least composed of ACTA2/alpha-actin, CNN1/calponin H1, PLN/phospholamban, PRKG1 and ITPR1. Interacts with IRAG1. Forms a stable complex with ITPR1, IRAG1, and isoform beta of PRKG1. Interacts with TRPC7 (via ankyrin repeat domain). Isoform alpha interacts with RGS2. Interacts with GTF2I. Autophosphorylation increases kinase activity. In terms of processing, 65 kDa monomer is produced by proteolytic cleavage. As to expression, high concentrations are detected in various smooth muscle: lung, rumen, trachea, aorta, uterus and stomach. Isoform alpha is expressed predominantly in heart, cerebellum and lung, whereas the beta isoform is expressed in high concentrations in trachea, aorta, stomach and uterus.

The protein localises to the cytoplasm. The enzyme catalyses L-seryl-[protein] + ATP = O-phospho-L-seryl-[protein] + ADP + H(+). It carries out the reaction L-threonyl-[protein] + ATP = O-phospho-L-threonyl-[protein] + ADP + H(+). In the absence of cGMP, PRKG1 activity is suppressed by autoinhibitory contacts. Its function is as follows. Serine/threonine protein kinase that acts as a key mediator of the nitric oxide (NO)/cGMP signaling pathway. GMP binding activates PRKG1, which phosphorylates serines and threonines on many cellular proteins. Numerous protein targets for PRKG1 phosphorylation are implicated in modulating cellular calcium, but the contribution of each of these targets may vary substantially among cell types. Proteins that are phosphorylated by PRKG1 regulate platelet activation and adhesion, smooth muscle contraction, cardiac function, gene expression, feedback of the NO-signaling pathway, and other processes involved in several aspects of the CNS like axon guidance, hippocampal and cerebellar learning, circadian rhythm and nociception. Smooth muscle relaxation is mediated through lowering of intracellular free calcium, by desensitization of contractile proteins to calcium, and by decrease in the contractile state of smooth muscle or in platelet activation. Regulates intracellular calcium levels via several pathways: phosphorylates IRAG1 and inhibits IP3-induced Ca(2+) release from intracellular stores, phosphorylation of KCNMA1 (BKCa) channels decreases intracellular Ca(2+) levels, which leads to increased opening of this channel. PRKG1 phosphorylates the canonical transient receptor potential channel (TRPC) family which inactivates the associated inward calcium current. Another mode of action of NO/cGMP/PKGI signaling involves PKGI-mediated inactivation of the Ras homolog gene family member A (RhoA). Phosphorylation of RHOA by PRKG1 blocks the action of this protein in myriad processes: regulation of RHOA translocation; decreasing contraction; controlling vesicle trafficking, reduction of myosin light chain phosphorylation resulting in vasorelaxation. Activation of PRKG1 by NO signaling also alters gene expression in a number of tissues. In smooth muscle cells, increased cGMP and PRKG1 activity influence expression of smooth muscle-specific contractile proteins, levels of proteins in the NO/cGMP signaling pathway, down-regulation of the matrix proteins osteopontin and thrombospondin-1 to limit smooth muscle cell migration and phenotype. Regulates vasodilator-stimulated phosphoprotein (VASP) functions in platelets and smooth muscle. The chain is cGMP-dependent protein kinase 1 (PRKG1) from Bos taurus (Bovine).